We begin with the raw amino-acid sequence, 51 residues long: Large ribosomal subunit protein bL33 (51 aa).

It belongs to the bacterial ribosomal protein bL33 family. In terms of assembly, part of the 50S ribosomal subunit. Cross-links to the P and E site tRNAs.

The protein is Large ribosomal subunit protein bL33 of Pseudomonas aeruginosa (strain ATCC 15692 / DSM 22644 / CIP 104116 / JCM 14847 / LMG 12228 / 1C / PRS 101 / PAO1).